A 298-amino-acid chain; its full sequence is MSNALYRGRFAPSPTGLLHAGSLSTAIGSYLEARSRGGEWLLRMEDLDPPREVPGAADDILRTLEAFGFEWDGEVVYQSRRHGLYRAALERLIASGRAYACCCTRKEIAATARRGLDGYVYPGTCRNGCPDGREGRAWRLRVDEGEWTAHDRLQGEHRQDLARDIGDFVLLRADGFWAYQLAVVVDDAEQGVTDIVRGADLLVSTPRQLAVYDALGQSAPGYCHLPVLTNAAGEKLSKQTLAPAISTRDAARQLREALAWLGHVPPADCGSLDELWPWAVANWSLSRVPAGPLQLPLS.

L-glutamate-binding positions include 9–13 (RFAPS) and E45. Residues 12–22 (PSPTGLLHAGS) carry the 'HIGH' region motif. C101, C103, Y121, and C125 together coordinate Zn(2+). The L-glutamate site is built by Y179 and R197. The 'KMSKS' region motif lies at 235–239 (KLSKQ). K238 contributes to the ATP binding site.

This sequence belongs to the class-I aminoacyl-tRNA synthetase family. GluQ subfamily. It depends on Zn(2+) as a cofactor.

Functionally, catalyzes the tRNA-independent activation of glutamate in presence of ATP and the subsequent transfer of glutamate onto a tRNA(Asp). Glutamate is transferred on the 2-amino-5-(4,5-dihydroxy-2-cyclopenten-1-yl) moiety of the queuosine in the wobble position of the QUC anticodon. In Chromobacterium violaceum (strain ATCC 12472 / DSM 30191 / JCM 1249 / CCUG 213 / NBRC 12614 / NCIMB 9131 / NCTC 9757 / MK), this protein is Glutamyl-Q tRNA(Asp) synthetase.